We begin with the raw amino-acid sequence, 129 residues long: MSEQIQSVGRRKEAVCRLYLTPGSGKWLVNGRTLGDYFPRPTLVSAIQQPFTLTDTLGRFDVKATIDGGGVSGQAGAVRLAVARALVQVDETNRKKLREFGLLTRDAREVERKKPGRAGARKRFQFSKR.

This sequence belongs to the universal ribosomal protein uS9 family.

The protein is Small ribosomal subunit protein uS9 of Gemmatimonas aurantiaca (strain DSM 14586 / JCM 11422 / NBRC 100505 / T-27).